The sequence spans 133 residues: Fatty acid-binding protein, heart (133 aa).

Residue V2 is modified to N-acetylvaline. At T8 the chain carries Phosphothreonine. Residue Y20 is modified to Phosphotyrosine; by Tyr-kinases. S23 carries the phosphoserine modification. A Phosphothreonine modification is found at T30. S83 carries the post-translational modification Phosphoserine. 127–129 provides a ligand contact to (9Z)-octadecenoate; the sequence is RTY. Residue 127-129 participates in hexadecanoate binding; sequence RTY. 127–129 provides a ligand contact to octadecanoate; it reads RTY.

Belongs to the calycin superfamily. Fatty-acid binding protein (FABP) family.

The protein localises to the cytoplasm. Its function is as follows. FABPs are thought to play a role in the intracellular transport of long-chain fatty acids and their acyl-CoA esters. The protein is Fatty acid-binding protein, heart (FABP3) of Bos mutus grunniens (Wild yak).